The chain runs to 288 residues: UPF0761 membrane protein HSM_1104 (288 aa).

6 helical membrane passes run 36 to 56 (TLAL…FPVF), 92 to 112 (QMSA…IHSI), 127 to 147 (PAIF…IVIA), 176 to 196 (LLSL…YMVV), 200 to 220 (KVSI…FTLG), and 240 to 260 (AMAT…AVLL).

This sequence belongs to the UPF0761 family.

It localises to the cell inner membrane. This chain is UPF0761 membrane protein HSM_1104, found in Histophilus somni (strain 2336) (Haemophilus somnus).